We begin with the raw amino-acid sequence, 439 residues long: GTPase Obg (439 aa).

The region spanning 5 to 164 is the Obg domain; the sequence is TDFFDQATIV…LTLELELKML (160 aa). The OBG-type G domain occupies 165-335; the sequence is ADVGLVGFPN…LLRRVADLLR (171 aa). Residues 171-178, 196-200, 217-220, 287-290, and 316-318 contribute to the GTP site; these read GFPNAGKS, FTTLT, DIPG, NKAD, and SAA. Mg(2+)-binding residues include serine 178 and threonine 198. One can recognise an OCT domain in the interval 356 to 433; sequence LPEVDENAFT…IGRAELVWDD (78 aa).

The protein belongs to the TRAFAC class OBG-HflX-like GTPase superfamily. OBG GTPase family. Monomer. Mg(2+) is required as a cofactor.

It localises to the cytoplasm. Functionally, an essential GTPase which binds GTP, GDP and possibly (p)ppGpp with moderate affinity, with high nucleotide exchange rates and a fairly low GTP hydrolysis rate. Plays a role in control of the cell cycle, stress response, ribosome biogenesis and in those bacteria that undergo differentiation, in morphogenesis control. The chain is GTPase Obg from Chloroflexus aurantiacus (strain ATCC 29364 / DSM 637 / Y-400-fl).